A 654-amino-acid polypeptide reads, in one-letter code: Threonine--tRNA ligase (654 aa).

The TGS domain maps to 1–63 (MAQISLTFPD…DADASIAIHT (63 aa)). Residues 247 to 544 (DHRKLGREMN…LIENFAGKLP (298 aa)) form a catalytic region. C344, H395, and H521 together coordinate Zn(2+).

The protein belongs to the class-II aminoacyl-tRNA synthetase family. As to quaternary structure, homodimer. Zn(2+) is required as a cofactor.

Its subcellular location is the cytoplasm. The catalysed reaction is tRNA(Thr) + L-threonine + ATP = L-threonyl-tRNA(Thr) + AMP + diphosphate + H(+). Functionally, catalyzes the attachment of threonine to tRNA(Thr) in a two-step reaction: L-threonine is first activated by ATP to form Thr-AMP and then transferred to the acceptor end of tRNA(Thr). Also edits incorrectly charged L-seryl-tRNA(Thr). This Dinoroseobacter shibae (strain DSM 16493 / NCIMB 14021 / DFL 12) protein is Threonine--tRNA ligase.